The chain runs to 495 residues: Ectonucleoside triphosphate diphosphohydrolase 2 (495 aa).

At Ala2–Arg4 the chain is on the cytoplasmic side. A helical membrane pass occupies residues Ala5–Leu25. The Extracellular portion of the chain corresponds to Gly26–Trp465. A glycan (N-linked (GlcNAc...) asparagine) is linked at Asn62. An intrachain disulfide couples Cys73 to Cys97. The active-site Proton acceptor is the Glu162. Gly201–Gln205 contacts ATP. Intrachain disulfides connect Cys239–Cys286, Cys267–Cys311, Cys324–Cys329, and Cys378–Cys400. N-linked (GlcNAc...) asparagine glycosylation occurs at Asn297. 2 N-linked (GlcNAc...) asparagine glycosylation sites follow: Asn418 and Asn444. The chain crosses the membrane as a helical span at residues Val466–Leu486. Topologically, residues Leu487–Ile495 are cytoplasmic.

This sequence belongs to the GDA1/CD39 NTPase family. The cofactor is Ca(2+). Requires Mg(2+) as cofactor.

The protein resides in the membrane. Functionally, in the nervous system, could hydrolyze ATP and other nucleotides to regulate purinergic neurotransmission. Hydrolyzes ADP only to a marginal extent. The protein is Ectonucleoside triphosphate diphosphohydrolase 2 (ENTPD2) of Gallus gallus (Chicken).